The chain runs to 291 residues: G1/S-specific cyclin-D1 (291 aa).

Position 282 is a phosphothreonine (Thr282).

Belongs to the cyclin family. Cyclin D subfamily. As to quaternary structure, interacts with the cdk4 and cdk6 protein kinases to form a serine/threonine kinase holoenzyme complex. The cyclin subunit imparts substrate specificity to the complex. Phosphorylation at Thr-282 by MAP kinases is required for ubiquitination and degradation by the DCX(AMBRA1) complex. In terms of processing, ubiquitinated by the DCX(AMBRA1) complex during the transition from G1 to S cell phase, leading to its degradation. The DCX(AMBRA1) complex represents the major regulator of CCND1 stability during the G1/S transition.

It is found in the nucleus. Its subcellular location is the cytoplasm. Its function is as follows. Regulatory component of the cyclin D1-CDK4 (DC) complex that phosphorylates and inhibits members of the retinoblastoma (RB) protein family including RB1 and regulates the cell-cycle during G(1)/S transition. Phosphorylation of RB1 allows dissociation of the transcription factor E2F from the RB/E2F complex and the subsequent transcription of E2F target genes which are responsible for the progression through the G(1) phase. Hypophosphorylates RB1 in early G(1) phase. Cyclin D-CDK4 complexes are major integrators of various mitogenenic and antimitogenic signals. This is G1/S-specific cyclin-D1 (ccnd1) from Xenopus laevis (African clawed frog).